The following is a 715-amino-acid chain: Transcription activator of gluconeogenesis MGYG_02011 (715 aa).

Over residues 1–14 the composition is skewed to polar residues; it reads MSPHQTTGQESDNM. Residues 1–28 are disordered; the sequence is MSPHQTTGQESDNMAVNGENAPASSQYI. A DNA-binding region (zn(2)-C6 fungal-type) is located at residues 66-94; sequence CYACQRGHLTCGDERPCQRCIKRGFQDAC. Composition is skewed to polar residues over residues 129–166, 179–191, 203–223, and 362–385; these read QNNV…PQNK, YASQ…TYQI, SLPQ…GQFN, and MMTT…RPNA. 4 disordered regions span residues 129 to 223, 354 to 414, 534 to 569, and 628 to 663; these read QNNV…GQFN, SPAS…RRRH, NHNV…NSST, and GSNG…NGRG. Low complexity predominate over residues 386–400; that stretch reads SVSQQRQQPVVSTPQ. Composition is skewed to polar residues over residues 535–554 and 639–649; these read HNVN…SRGS and GEASSSEANEL. Over residues 650 to 662 the composition is skewed to low complexity; the sequence is NGSNANGATTNGR.

Belongs to the ERT1/acuK family.

Its subcellular location is the nucleus. Functionally, transcription factor which regulates nonfermentable carbon utilization. Activator of gluconeogenetic genes. This is Transcription activator of gluconeogenesis MGYG_02011 from Arthroderma gypseum (strain ATCC MYA-4604 / CBS 118893) (Microsporum gypseum).